The sequence spans 131 residues: Profilin-1 (131 aa).

The protein belongs to the profilin family. Occurs in many kinds of cells as a complex with monomeric actin in a 1:1 ratio.

It localises to the cytoplasm. Its subcellular location is the cytoskeleton. In terms of biological role, binds to actin and affects the structure of the cytoskeleton. At high concentrations, profilin prevents the polymerization of actin, whereas it enhances it at low concentrations. By binding to PIP2, it inhibits the formation of IP3 and DG. The chain is Profilin-1 (PRO1) from Hordeum vulgare (Barley).